We begin with the raw amino-acid sequence, 222 residues long: uncharacterized protein (222 aa).

Residues 142–222 (ARRGGCVHPP…LPDPPSAGHL (81 aa)) form a disordered region. The span at 160-169 (QSRSISSRRA) shows a compositional bias: low complexity. The span at 182–196 (PRRRPHRHRTRPQTR) shows a compositional bias: basic residues.

Belongs to the Rv1128c/1148c/1588c/1702c/1945/3466 family.

This is an uncharacterized protein from Mycobacterium tuberculosis (strain CDC 1551 / Oshkosh).